The following is a 170-amino-acid chain: Probable T4-type lysozyme 1 (170 aa).

Glutamate 13 (proton donor) is an active-site residue. The active-site Nucleophile is the aspartate 22.

It belongs to the glycosyl hydrolase 24 family.

It catalyses the reaction Hydrolysis of (1-&gt;4)-beta-linkages between N-acetylmuramic acid and N-acetyl-D-glucosamine residues in a peptidoglycan and between N-acetyl-D-glucosamine residues in chitodextrins.. The sequence is that of Probable T4-type lysozyme 1 from Dictyostelium discoideum (Social amoeba).